Reading from the N-terminus, the 601-residue chain is Transcription factor Ken (601 aa).

The BTB domain occupies 33–101; that stretch reads ADLTIVCENK…LYSGQTCITS (69 aa). Disordered stretches follow at residues 188–276, 331–365, and 471–491; these read AAEC…TINP, LSDG…DNQP, and DHPE…AGSN. Composition is skewed to basic and acidic residues over residues 190–200 and 207–216; these read ECERSGGHNNK and CTHKDNKSDK. The span at 223–234 shows a compositional bias: polar residues; sequence NLSNAPPSGTSG. Low complexity predominate over residues 235-247; that stretch reads SNSNISTSSNHQQ. Positions 248-258 are enriched in basic residues; sequence QQHHHHHHHNH. Low complexity predominate over residues 259–275; that stretch reads NNNNNNNNNNSSSSTIN. Over residues 476–490 the composition is skewed to low complexity; that stretch reads RSGSASGSGANLAGS. C2H2-type zinc fingers lie at residues 500 to 522, 528 to 551, and 567 to 590; these read YRCE…LRVH, FACR…CSVH, and YSCC…SGHH.

In terms of tissue distribution, expressed from stage 5 in two rather faint stripes at positions of 64% (anterior domain; AD) and 17% (posterior domain; PD) egg length. During early gastrulation, at stage 6, these two stripes become more evident and detectable at the region posterior to the cephalic furrow and in the hindgut primordium. The AD disappears as gastrulation proceeds, while the PD remains. At stage 15, the AD appears again in the foregut, and PD expression in the hindgut and anal pad. In imaginal disks, it is ubiquitously expressed in both males and females in genital and eye-antennal disks. Not expressed in the brain. In genital disks, it is expressed along the margin of the anterior bulbus in males, while in females it is expressed in the posterior compartment along the anterior-posterior border, with medial expansion in the most posterior region.

The protein resides in the nucleus. Transcription factor required for terminalia development. Negative regulator of the JAK/STAT pathway: represses JAK/STAT-dependent expression of ventral veins lacking (vvl) in the posterior spiracles. The protein is Transcription factor Ken (ken) of Drosophila melanogaster (Fruit fly).